Here is a 218-residue protein sequence, read N- to C-terminus: Cytidylate kinase (218 aa).

Residue 11–19 (GPGASGKGT) participates in ATP binding.

The protein belongs to the cytidylate kinase family. Type 1 subfamily.

Its subcellular location is the cytoplasm. The enzyme catalyses CMP + ATP = CDP + ADP. It catalyses the reaction dCMP + ATP = dCDP + ADP. The sequence is that of Cytidylate kinase from Neisseria meningitidis serogroup A / serotype 4A (strain DSM 15465 / Z2491).